The chain runs to 875 residues: DNA topoisomerase 3-beta (875 aa).

The 151-residue stretch at 3 to 153 (SVLMVAEKPS…QVTYRAHFSA (151 aa)) folds into the Toprim domain. Positions 170 to 589 (NENEAKSVDA…AIKIFKLKFM (420 aa)) constitute a Topo IA-type catalytic domain. Tyr-332 (O-(5'-phospho-DNA)-tyrosine intermediate) is an active-site residue. Positions 371–391 (QTPRKGKDAGDHPPITPMKLG) are disordered.

Belongs to the type IA topoisomerase family.

The enzyme catalyses ATP-independent breakage of single-stranded DNA, followed by passage and rejoining.. In terms of biological role, releases the supercoiling and torsional tension of DNA introduced during the DNA replication and transcription by transiently cleaving and rejoining one strand of the DNA duplex. Introduces a single-strand break via transesterification at a target site in duplex DNA. The scissile phosphodiester is attacked by the catalytic tyrosine of the enzyme, resulting in the formation of a DNA-(5'-phosphotyrosyl)-enzyme intermediate and the expulsion of a 3'-OH DNA strand. The free DNA strand than undergoes passage around the unbroken strand thus removing DNA supercoils. Finally, in the religation step, the DNA 3'-OH attacks the covalent intermediate to expel the active-site tyrosine and restore the DNA phosphodiester backbone. Weakly relaxes negative supercoils and displays a distinct preference for binding single-stranded DNA. This is DNA topoisomerase 3-beta (Top3beta) from Drosophila melanogaster (Fruit fly).